A 319-amino-acid chain; its full sequence is MSNQLASLRDITTVVADTGDIDAIKKYQPVDATTNPSLLLKAAGLPQYASLIDDAVAWAKLQSNDAEQQLTDASDKLAVAIGKEISGTIPGRISTEVDARLSFDTAATIEKAERLVQLYEDAGIDKSRILIKIASTWEGIQAAEALEKKGIQCNLTLLFSFAQAQACAEAGVYLISPFVGRILDWYKKATGTESYAPDEDPGVVSVTKIYNYYKEHGYKTVVMGASFRNIGEIQALAGCDRLTISPALLEELANEPGDLEVKLKDNDATKTPGERLTESEFRWAMNEDAMATEKLSEGIRNFAADQEKLEATLREKLSA.

Catalysis depends on K132, which acts as the Schiff-base intermediate with substrate.

It belongs to the transaldolase family. Type 1 subfamily. As to quaternary structure, homodimer.

It localises to the cytoplasm. The enzyme catalyses D-sedoheptulose 7-phosphate + D-glyceraldehyde 3-phosphate = D-erythrose 4-phosphate + beta-D-fructose 6-phosphate. It functions in the pathway carbohydrate degradation; pentose phosphate pathway; D-glyceraldehyde 3-phosphate and beta-D-fructose 6-phosphate from D-ribose 5-phosphate and D-xylulose 5-phosphate (non-oxidative stage): step 2/3. Transaldolase is important for the balance of metabolites in the pentose-phosphate pathway. This is Transaldolase from Alteromonas mediterranea (strain DSM 17117 / CIP 110805 / LMG 28347 / Deep ecotype).